The following is a 244-amino-acid chain: Phosphoadenosine 5'-phosphosulfate reductase (244 aa).

Residue Cys239 is the Nucleophile; cysteine thiosulfonate intermediate of the active site.

This sequence belongs to the PAPS reductase family. CysH subfamily.

The protein localises to the cytoplasm. The enzyme catalyses [thioredoxin]-disulfide + sulfite + adenosine 3',5'-bisphosphate + 2 H(+) = [thioredoxin]-dithiol + 3'-phosphoadenylyl sulfate. Its pathway is sulfur metabolism; hydrogen sulfide biosynthesis; sulfite from sulfate: step 3/3. In terms of biological role, catalyzes the formation of sulfite from phosphoadenosine 5'-phosphosulfate (PAPS) using thioredoxin as an electron donor. The sequence is that of Phosphoadenosine 5'-phosphosulfate reductase from Enterobacter sp. (strain 638).